A 341-amino-acid polypeptide reads, in one-letter code: HTH-type transcriptional repressor PurR (341 aa).

An HTH lacI-type domain is found at 2-56; it reads ATIKDVAKRANVSTTTVSHVINKTRFVAEETRNAVWTAIKELHYSPSAVARSLKV. A DNA-binding region (H-T-H motif) is located at residues 4–23; it reads IKDVAKRANVSTTTVSHVIN. A DNA-binding region spans residues 48–56; sequence SAVARSLKV. Hypoxanthine is bound by residues Tyr-73, Arg-190, Thr-192, Phe-221, and Asp-275.

Homodimer.

Its pathway is purine metabolism; purine nucleotide biosynthesis [regulation]. Is the main repressor of the genes involved in the de novo synthesis of purine nucleotides, regulating purB, purC, purEK, purF, purHD, purL, purMN and guaBA expression. PurR is allosterically activated to bind its cognate DNA by binding the purine corepressors, hypoxanthine or guanine, thereby effecting transcription repression. The polypeptide is HTH-type transcriptional repressor PurR (Salmonella paratyphi A (strain ATCC 9150 / SARB42)).